A 216-amino-acid chain; its full sequence is Protein-L-isoaspartate O-methyltransferase (216 aa).

Ser-62 is a catalytic residue.

It belongs to the methyltransferase superfamily. L-isoaspartyl/D-aspartyl protein methyltransferase family.

The protein resides in the cytoplasm. It carries out the reaction [protein]-L-isoaspartate + S-adenosyl-L-methionine = [protein]-L-isoaspartate alpha-methyl ester + S-adenosyl-L-homocysteine. Catalyzes the methyl esterification of L-isoaspartyl residues in peptides and proteins that result from spontaneous decomposition of normal L-aspartyl and L-asparaginyl residues. It plays a role in the repair and/or degradation of damaged proteins. The polypeptide is Protein-L-isoaspartate O-methyltransferase (Methanospirillum hungatei JF-1 (strain ATCC 27890 / DSM 864 / NBRC 100397 / JF-1)).